The sequence spans 571 residues: Sialate:O-sulfotransferase 2 (571 aa).

Over 1–20 (MAKLWFKFQRCFRYFRRKPV) the chain is Cytoplasmic. A helical membrane pass occupies residues 21-43 (RFFTLLAIYLTAGSLVFLHSGFV). Topologically, residues 44 to 571 (GQPAVPQSQA…TGVPDAYGPR (528 aa)) are extracellular. 2 consecutive WSC domains span residues 133 to 225 (KAKY…YRLQ) and 236 to 330 (SAVF…YQTQ). 2 N-linked (GlcNAc...) asparagine glycosylation sites follow: Asn195 and Asn248.

It belongs to the WSCD family.

The protein localises to the golgi apparatus membrane. Its function is as follows. Sialate:O-sulfotransferase that catalyzes 8-O-sulfation at the Sia-glycan level using 3'-phosphoadenosine 5'-phosphosulfate (PAPS) as a donor, forming 8-O-sulfated Sia (Sia8S)-glycans. Displays selectivity toward glycoproteins such as TF/transferrin. The polypeptide is Sialate:O-sulfotransferase 2 (Wscd2) (Mus musculus (Mouse)).